The following is a 366-amino-acid chain: Transcription factor IIIA (366 aa).

C2H2-type zinc fingers lie at residues 35–59 (YICS…LCKH), 65–89 (FPCK…SLTH), 95–120 (FTCD…NRFH), 127–151 (YVCH…QFSH), 157–181 (YECP…EKVH), 184–210 (YPCK…AECH), 214–236 (AVCD…QKTH), 243–268 (YLCP…QSFH), and 274–298 (FVCE…SVVH). Residue Ser-38 is modified to Phosphoserine; by CK2. The span at 299 to 310 (DPEKRKLKEKCP) shows a compositional bias: basic and acidic residues. The tract at residues 299–366 (DPEKRKLKEK…SLVLDKLTIQ (68 aa)) is disordered. Ser-336 carries the post-translational modification Phosphoserine; by CK2; in vitro.

In terms of processing, the N-terminus is blocked. Synthesized in oocytes and, in much lower levels, in somatic cells.

Its subcellular location is the nucleus. In terms of biological role, involved in ribosomal large subunit biogenesis. Acts both as a positive transcription factor for 5S RNA genes, and as a specific RNA binding protein that complexes with 5S RNA in oocytes to form the 7S ribonucleoprotein storage particle. May play an essential role in the developmental change in 5S RNA gene expression. Interacts with the internal control region (ICR) of approximately 50 bases within the 5S RNA genes, is required for correct transcription of these genes by RNA polymerase III. Also binds the transcribed 5S RNA's. This chain is Transcription factor IIIA (gtf3a), found in Xenopus laevis (African clawed frog).